The following is a 20-amino-acid chain: Equinatoxin-1 (20 aa).

The interval 3 to 12 (AVAGAVIEGA) is plays an important role in the hemolytic activity. The segment at 11–20 (GASLTFNVLQ) is N-terminal region.

This sequence belongs to the actinoporin family. Sea anemone subfamily. In terms of assembly, octamer or nonamer in membranes. Monomer in the soluble state.

The protein resides in the secreted. It localises to the nematocyst. It is found in the target cell membrane. Functionally, pore-forming protein that forms cations-selective hydrophilic pores of around 1 nm and causes cardiac stimulation and cytolysis. Pore formation is a multi-step process that involves specific recognition of membrane sphingomyelin (but neither cholesterol nor phosphatidylcholine) using aromatic rich region and adjacent phosphocholine (POC) binding site, firm binding to the membrane (mainly driven by hydrophobic interactions) accompanied by the transfer of the N-terminal region to the lipid-water interface and finally pore formation after oligomerization of monomers. Cytolytic effects include red blood cells hemolysis, platelet aggregation and lysis, cytotoxic and cytostatic effects on fibroblasts. Lethality in mammals has been ascribed to severe vasospasm of coronary vessels, cardiac arrhythmia, and inotropic effects. In Actinia equina (Beadlet anemone), this protein is Equinatoxin-1.